The sequence spans 616 residues: Chaperone protein HscA (616 aa).

Belongs to the heat shock protein 70 family.

Its function is as follows. Chaperone involved in the maturation of iron-sulfur cluster-containing proteins. Has a low intrinsic ATPase activity which is markedly stimulated by HscB. Involved in the maturation of IscU. This is Chaperone protein HscA from Escherichia coli O7:K1 (strain IAI39 / ExPEC).